Here is a 425-residue protein sequence, read N- to C-terminus: Serine--tRNA ligase (425 aa).

228 to 230 (TAE) lines the L-serine pocket. Position 259 to 261 (259 to 261 (RSE)) interacts with ATP. Glutamate 282 is a binding site for L-serine. 346–349 (EIAS) lines the ATP pocket. L-serine is bound at residue serine 382.

This sequence belongs to the class-II aminoacyl-tRNA synthetase family. Type-1 seryl-tRNA synthetase subfamily. In terms of assembly, homodimer. The tRNA molecule binds across the dimer.

It localises to the cytoplasm. The catalysed reaction is tRNA(Ser) + L-serine + ATP = L-seryl-tRNA(Ser) + AMP + diphosphate + H(+). It carries out the reaction tRNA(Sec) + L-serine + ATP = L-seryl-tRNA(Sec) + AMP + diphosphate + H(+). Its pathway is aminoacyl-tRNA biosynthesis; selenocysteinyl-tRNA(Sec) biosynthesis; L-seryl-tRNA(Sec) from L-serine and tRNA(Sec): step 1/1. In terms of biological role, catalyzes the attachment of serine to tRNA(Ser). Is also able to aminoacylate tRNA(Sec) with serine, to form the misacylated tRNA L-seryl-tRNA(Sec), which will be further converted into selenocysteinyl-tRNA(Sec). The polypeptide is Serine--tRNA ligase (Rickettsia canadensis (strain McKiel)).